We begin with the raw amino-acid sequence, 31 residues long: MSVFLGYIIFLAAFFGLATGLFLGLKAIKLI.

A helical membrane pass occupies residues 3 to 23 (VFLGYIIFLAAFFGLATGLFL).

Belongs to the PetL family. In terms of assembly, the 4 large subunits of the cytochrome b6-f complex are cytochrome b6, subunit IV (17 kDa polypeptide, PetD), cytochrome f and the Rieske protein, while the 4 small subunits are PetG, PetL, PetM and PetN. The complex functions as a dimer.

It localises to the plastid. The protein localises to the chloroplast thylakoid membrane. Functionally, component of the cytochrome b6-f complex, which mediates electron transfer between photosystem II (PSII) and photosystem I (PSI), cyclic electron flow around PSI, and state transitions. PetL is important for photoautotrophic growth as well as for electron transfer efficiency and stability of the cytochrome b6-f complex. This is Cytochrome b6-f complex subunit 6 from Pyropia yezoensis (Susabi-nori).